A 360-amino-acid chain; its full sequence is Protein Wnt-2 (360 aa).

An N-terminal signal peptide occupies residues 1–25 (MNAPLGGIWLWLPLLLTWLTPEVNS). Intrachain disulfides connect cysteine 76/cysteine 87, cysteine 127/cysteine 135, cysteine 137/cysteine 157, cysteine 206/cysteine 220, cysteine 208/cysteine 215, cysteine 278/cysteine 309, cysteine 294/cysteine 304, cysteine 308/cysteine 348, cysteine 324/cysteine 339, cysteine 326/cysteine 336, and cysteine 331/cysteine 332. The O-palmitoleoyl serine; by PORCN moiety is linked to residue serine 212. N-linked (GlcNAc...) asparagine glycosylation is present at asparagine 295.

It belongs to the Wnt family. In terms of processing, palmitoleoylation is required for efficient binding to frizzled receptors. Depalmitoleoylation leads to Wnt signaling pathway inhibition.

It is found in the secreted. The protein localises to the extracellular space. It localises to the extracellular matrix. In terms of biological role, ligand for members of the frizzled family of seven transmembrane receptors. Functions in the canonical Wnt signaling pathway that results in activation of transcription factors of the TCF/LEF family. Functions as a upstream regulator of FGF10 expression. Plays an important role in embryonic lung development. May contribute to embryonic brain development by regulating the proliferation of dopaminergic precursors and neurons. The chain is Protein Wnt-2 (WNT2) from Gorilla gorilla gorilla (Western lowland gorilla).